Reading from the N-terminus, the 270-residue chain is MPRLPLLLLLLPSLARGLGLRDAGRRHPECSPCQQDRCPAPSPCPAPWISARDECGCCARCLGAEGASCGGPVGSRCGPGLVCASRASGTAPEGTGLCVCAQRGAVCGSDGRSYSSICALRLRARHAPRAHHGHLHKARDGPCEFAPVVLMPPRDIHNVTGTQVFLSCEVKAVPTPVITWKKVKHSPEGTEGLEELPGDHVNIAVQVRGGPSDHETTSWILINPLRKEDEGVYHCHAANAIGEAQSHGTVTVLDLNRYKSLYSSVPGDLL.

An N-terminal signal peptide occupies residues 1–17; sequence MPRLPLLLLLLPSLARG. The 76-residue stretch at 26-101 folds into the IGFBP N-terminal domain; that stretch reads RHPECSPCQQ…PEGTGLCVCA (76 aa). 7 disulfide bridges follow: cysteine 30–cysteine 55, cysteine 33–cysteine 57, cysteine 38–cysteine 58, cysteine 44–cysteine 61, cysteine 69–cysteine 83, cysteine 77–cysteine 98, and cysteine 107–cysteine 143. One can recognise a Kazal-like domain in the interval 87-145; sequence ASGTAPEGTGLCVCAQRGAVCGSDGRSYSSICALRLRARHAPRAHHGHLHKARDGPCEF. The Ig-like C2-type domain occupies 147–251; that stretch reads PVVLMPPRDI…GEAQSHGTVT (105 aa). Residue asparagine 158 is glycosylated (N-linked (GlcNAc...) asparagine). A disulfide bond links cysteine 168 and cysteine 235.

It is found in the secreted. IGF-binding proteins prolong the half-life of IGFs and have been shown to either inhibit or stimulate the growth promoting effects of the IGFs in cell culture. They alter the interaction of IGFs with their cell surface receptors. The chain is Insulin-like growth factor-binding protein-like 1 (Igfbpl1) from Mus musculus (Mouse).